The primary structure comprises 333 residues: Phosphate acyltransferase (333 aa).

The protein belongs to the PlsX family. As to quaternary structure, homodimer. Probably interacts with PlsY.

It is found in the cytoplasm. The catalysed reaction is a fatty acyl-[ACP] + phosphate = an acyl phosphate + holo-[ACP]. Its pathway is lipid metabolism; phospholipid metabolism. In terms of biological role, catalyzes the reversible formation of acyl-phosphate (acyl-PO(4)) from acyl-[acyl-carrier-protein] (acyl-ACP). This enzyme utilizes acyl-ACP as fatty acyl donor, but not acyl-CoA. The polypeptide is Phosphate acyltransferase (Cellvibrio japonicus (strain Ueda107) (Pseudomonas fluorescens subsp. cellulosa)).